The primary structure comprises 1188 residues: DNA-directed RNA polymerase subunit beta (1188 aa).

This sequence belongs to the RNA polymerase beta chain family. As to quaternary structure, the RNAP catalytic core consists of 2 alpha, 1 beta, 1 beta' and 1 omega subunit. When a sigma factor is associated with the core the holoenzyme is formed, which can initiate transcription.

It catalyses the reaction RNA(n) + a ribonucleoside 5'-triphosphate = RNA(n+1) + diphosphate. Its function is as follows. DNA-dependent RNA polymerase catalyzes the transcription of DNA into RNA using the four ribonucleoside triphosphates as substrates. This chain is DNA-directed RNA polymerase subunit beta, found in Streptococcus pyogenes serotype M1.